We begin with the raw amino-acid sequence, 332 residues long: L-lactate dehydrogenase C chain (332 aa).

A Blocked amino end (Ser) modification is found at Ser2. NAD(+) contacts are provided by residues 29-57 (GNVG…DTNK) and Arg99. Residues Arg106, Asn138, and Arg169 each contribute to the substrate site. Asn138 provides a ligand contact to NAD(+). His193 (proton acceptor) is an active-site residue. Residue Thr248 coordinates substrate.

It belongs to the LDH/MDH superfamily. LDH family. In terms of assembly, homotetramer. Interacts with RABL2/RABL2A; binds preferentially to GTP-bound RABL2. As to expression, expressed within the midpiece of sperm tail (at protein level).

It is found in the cytoplasm. The enzyme catalyses (S)-lactate + NAD(+) = pyruvate + NADH + H(+). The protein operates within fermentation; pyruvate fermentation to lactate; (S)-lactate from pyruvate: step 1/1. Possible role in sperm motility. This is L-lactate dehydrogenase C chain (Ldhc) from Mus musculus (Mouse).